The following is a 278-amino-acid chain: uncharacterized protein (278 aa).

Residues Met-1–Met-11 are compositionally biased toward basic and acidic residues. Disordered regions lie at residues Met-1–Lys-107 and Lys-206–Arg-278. Residues Lys-62–Ser-94 show a composition bias toward low complexity. Positions Lys-97–Lys-107 are enriched in basic and acidic residues. Residues Ser-249 to Lys-260 show a composition bias toward polar residues. Residues Lys-264–Arg-278 show a composition bias toward low complexity.

This is an uncharacterized protein from Acanthamoeba polyphaga mimivirus (APMV).